Consider the following 1174-residue polypeptide: Tight junction protein 2 (1174 aa).

A PDZ 1 domain is found at 10-97; that stretch reads TVTLQKDSKR…IAAIVVKRPR (88 aa). 10 positions are modified to phosphoserine: serine 107, serine 127, serine 130, serine 140, serine 145, serine 147, serine 151, serine 173, serine 195, and serine 217. The segment covering 125 to 137 has biased composition (basic and acidic residues); the sequence is GRSARSGYSERSR. The disordered stretch occupies residues 125-290; sequence GRSARSGYSE…AGQPDSDRPI (166 aa). Basic and acidic residues predominate over residues 146–214; that stretch reads RSWEDSPERG…DYGRPGERSH (69 aa). Basic and acidic residues predominate over residues 220–235; sequence RGYDRGYDRGYDRGYD. The residue at position 239 (serine 239) is a Phosphoserine. Composition is skewed to basic and acidic residues over residues 243 to 266 and 274 to 288; these read EYGRRTQPDARHAGSRSRSREHLR and LRGRPDHAGQPDSDR. The PDZ 2 domain maps to 291–369; sequence GVLLMKSKAN…KLQLVVLRDS (79 aa). Serine 309, serine 382, serine 384, serine 390, serine 399, serine 408, serine 414, and serine 415 each carry phosphoserine. Residues 391–430 are disordered; the sequence is EIESNRSFSPEERRQQYSDYDYHSSNEKLKERPNSREDMQ. Over residues 399 to 430 the composition is skewed to basic and acidic residues; the sequence is SPEERRQQYSDYDYHSSNEKLKERPNSREDMQ. Threonine 439 is modified (phosphothreonine). Positions 456–490 are disordered; the sequence is ENSKEPRYQEEPPAPQPKAAPRTFLRPSPEDEAIY. Serine 483 is subject to Phosphoserine. The region spanning 493-574 is the PDZ 3 domain; that stretch reads NTKMVRFKKG…GEMVTILAQS (82 aa). Tyrosine 558 bears the Phosphotyrosine mark. The SH3 domain maps to 588–653; the sequence is GDSFFIRSHF…PNKSRAEQMA (66 aa). The region spanning 679–860 is the Guanylate kinase-like domain; that stretch reads MKKNLRKSRE…WFGSLKDTIQ (182 aa). 2 positions are modified to phosphoserine: serine 686 and serine 886. Position 889 is a phosphothreonine (threonine 889). Serine 897 and serine 904 each carry phosphoserine. Disordered regions lie at residues 904–1065 and 1100–1174; these read SDFE…VLGK and DIYA…DTEL. Phosphothreonine occurs at positions 909 and 917. Over residues 940-951 the composition is skewed to basic and acidic residues; sequence VQHEESIRKPSP. Serine 950, serine 962, serine 970, serine 990, and serine 1052 each carry phosphoserine. Over residues 978-1000 the composition is skewed to basic and acidic residues; sequence EPPKAKTQNREESFDISRSHDYK. The span at 1044–1056 shows a compositional bias: acidic residues; it reads ESEEVGEGSEEQE. Tyrosine 1102 carries the phosphotyrosine modification. Phosphoserine is present on residues serine 1131 and serine 1143. The segment covering 1150–1159 has biased composition (basic and acidic residues); it reads YRQQLSEHSK. The interaction with SCRIB stretch occupies residues 1172–1174; sequence TEL.

The protein belongs to the MAGUK family. As to quaternary structure, homodimer. Interacts (via PDZ2 domain) with TJP1/ZO1 (via PDZ2 domain). Interacts with UBN1. Interacts with SCRIB. Interacts with OCLN. Interacts with SAFB in the nucleus. Interacts with USP53 (via the C-terminal region). Interacts with claudins, including CLDN1, CLDN2, CLDN3, CLDN5 and CLDN7. Interacts with CLDN18. Interacts (via N-terminus) with CTNNA1. In terms of processing, phosphorylated.

The protein resides in the cell junction. Its subcellular location is the adherens junction. It is found in the cell membrane. The protein localises to the nucleus. It localises to the tight junction. Functionally, plays a role in tight junctions and adherens junctions. Acts as a positive regulator of RANKL-induced osteoclast differentiation, potentially via mediating downstream transcriptional activity. The polypeptide is Tight junction protein 2 (Canis lupus familiaris (Dog)).